The primary structure comprises 1004 residues: DNA-directed RNA polymerase subunit beta' (1004 aa).

3 residues coordinate Mg(2+): Asp-388, Asp-390, and Asp-392. Zn(2+) contacts are provided by Cys-757, Cys-831, Cys-838, and Cys-841.

It belongs to the RNA polymerase beta' chain family. In terms of assembly, the RNAP catalytic core consists of 2 alpha, 1 beta, 1 beta' and 1 omega subunit. When a sigma factor is associated with the core the holoenzyme is formed, which can initiate transcription. Mg(2+) is required as a cofactor. Zn(2+) serves as cofactor.

It catalyses the reaction RNA(n) + a ribonucleoside 5'-triphosphate = RNA(n+1) + diphosphate. Its function is as follows. DNA-dependent RNA polymerase catalyzes the transcription of DNA into RNA using the four ribonucleoside triphosphates as substrates. This chain is DNA-directed RNA polymerase subunit beta', found in Oenococcus oeni (Leuconostoc oenos).